The primary structure comprises 455 residues: Glutamyl-tRNA reductase (455 aa).

Residues 49-52 (TCNR), Ser-109, 114-116 (ETQ), and Gln-120 each bind substrate. Cys-50 serves as the catalytic Nucleophile. 189-194 (GAGKMG) contacts NADP(+).

It belongs to the glutamyl-tRNA reductase family. Homodimer.

It carries out the reaction (S)-4-amino-5-oxopentanoate + tRNA(Glu) + NADP(+) = L-glutamyl-tRNA(Glu) + NADPH + H(+). Its pathway is porphyrin-containing compound metabolism; protoporphyrin-IX biosynthesis; 5-aminolevulinate from L-glutamyl-tRNA(Glu): step 1/2. Functionally, catalyzes the NADPH-dependent reduction of glutamyl-tRNA(Glu) to glutamate 1-semialdehyde (GSA). The protein is Glutamyl-tRNA reductase of Bacillus subtilis (strain 168).